A 106-amino-acid polypeptide reads, in one-letter code: uncharacterized protein (106 aa).

This sequence belongs to the csb family.

This is an uncharacterized protein from Dictyostelium discoideum (Social amoeba).